Reading from the N-terminus, the 209-residue chain is Small ribosomal subunit protein uS3 (209 aa).

Positions 38–107 (IRKFIKNKYY…RVVINIEEIK (70 aa)) constitute a KH type-2 domain.

It belongs to the universal ribosomal protein uS3 family. Part of the 30S ribosomal subunit. Forms a tight complex with proteins S10 and S14.

Binds the lower part of the 30S subunit head. Binds mRNA in the 70S ribosome, positioning it for translation. This is Small ribosomal subunit protein uS3 from Thermotoga sp. (strain RQ2).